Consider the following 253-residue polypeptide: Probable transcriptional regulatory protein Tlet_1011 (253 aa).

Belongs to the TACO1 family.

Its subcellular location is the cytoplasm. This chain is Probable transcriptional regulatory protein Tlet_1011, found in Pseudothermotoga lettingae (strain ATCC BAA-301 / DSM 14385 / NBRC 107922 / TMO) (Thermotoga lettingae).